A 301-amino-acid chain; its full sequence is Protoheme IX farnesyltransferase (301 aa).

Helical transmembrane passes span Val-9 to Ile-29, Ile-42 to Leu-62, Thr-89 to Trp-109, Leu-113 to Val-133, Val-142 to Gly-162, Pro-168 to Met-188, Val-211 to Pro-231, Ala-232 to Ala-252, and Val-280 to Leu-300.

It belongs to the UbiA prenyltransferase family. Protoheme IX farnesyltransferase subfamily.

It is found in the cell membrane. The enzyme catalyses heme b + (2E,6E)-farnesyl diphosphate + H2O = Fe(II)-heme o + diphosphate. It functions in the pathway porphyrin-containing compound metabolism; heme O biosynthesis; heme O from protoheme: step 1/1. Converts heme B (protoheme IX) to heme O by substitution of the vinyl group on carbon 2 of heme B porphyrin ring with a hydroxyethyl farnesyl side group. This Rhodococcus jostii (strain RHA1) protein is Protoheme IX farnesyltransferase.